The chain runs to 344 residues: Eukaryotic translation initiation factor 2 subunit alpha homolog (344 aa).

Positions 21–92 (DMAVMIQVKN…EKGYIDLSKR (72 aa)) constitute an S1 motif domain. Residue Ser-56 is modified to Phosphoserine; by GCN2. A disordered region spans residues 312–344 (DNEEMSGDEDSGDEEEDTGMGEVDLDAGAGIIE). A compositionally biased stretch (acidic residues) spans 314–336 (EEMSGDEDSGDEEEDTGMGEVDL).

It belongs to the eIF-2-alpha family. In terms of assembly, heterotrimer composed of an alpha, a beta and a gamma chain. Phosphorylated at Ser-56 by GCN2.

In terms of biological role, functions in the early steps of protein synthesis by forming a ternary complex with GTP and initiator tRNA. This complex binds to a 40S ribosomal subunit, followed by mRNA binding to form a 43S pre-initiation complex. Junction of the 60S ribosomal subunit to form the 80S initiation complex is preceded by hydrolysis of the GTP bound to eIF-2 and release of an eIF-2-GDP binary complex. In order for eIF-2 to recycle and catalyze another round of initiation, the GDP bound to eIF-2 must exchange with GTP by way of a reaction catalyzed by eIF-2B. The chain is Eukaryotic translation initiation factor 2 subunit alpha homolog from Arabidopsis thaliana (Mouse-ear cress).